A 652-amino-acid chain; its full sequence is DNA ligase (652 aa).

Residues 29 to 33 (DSEYD), 78 to 79 (SL), and E107 each bind NAD(+). The active-site N6-AMP-lysine intermediate is the K109. Positions 130, 164, 278, and 302 each coordinate NAD(+). The Zn(2+) site is built by C395, C398, C413, and C418. Positions 577–652 (DRQAELFGLT…IEDEDWLLNL (76 aa)) constitute a BRCT domain.

It belongs to the NAD-dependent DNA ligase family. LigA subfamily. Mg(2+) serves as cofactor. Mn(2+) is required as a cofactor.

It catalyses the reaction NAD(+) + (deoxyribonucleotide)n-3'-hydroxyl + 5'-phospho-(deoxyribonucleotide)m = (deoxyribonucleotide)n+m + AMP + beta-nicotinamide D-nucleotide.. Its function is as follows. DNA ligase that catalyzes the formation of phosphodiester linkages between 5'-phosphoryl and 3'-hydroxyl groups in double-stranded DNA using NAD as a coenzyme and as the energy source for the reaction. It is essential for DNA replication and repair of damaged DNA. This Streptococcus equi subsp. zooepidemicus (strain MGCS10565) protein is DNA ligase.